The following is a 354-amino-acid chain: UDP-3-O-acylglucosamine N-acyltransferase (354 aa).

The active-site Proton acceptor is His-258.

The protein belongs to the transferase hexapeptide repeat family. LpxD subfamily. Homotrimer.

It carries out the reaction a UDP-3-O-[(3R)-3-hydroxyacyl]-alpha-D-glucosamine + a (3R)-hydroxyacyl-[ACP] = a UDP-2-N,3-O-bis[(3R)-3-hydroxyacyl]-alpha-D-glucosamine + holo-[ACP] + H(+). Its pathway is bacterial outer membrane biogenesis; LPS lipid A biosynthesis. Catalyzes the N-acylation of UDP-3-O-acylglucosamine using 3-hydroxyacyl-ACP as the acyl donor. Is involved in the biosynthesis of lipid A, a phosphorylated glycolipid that anchors the lipopolysaccharide to the outer membrane of the cell. The polypeptide is UDP-3-O-acylglucosamine N-acyltransferase (Sinorhizobium fredii (strain NBRC 101917 / NGR234)).